We begin with the raw amino-acid sequence, 1250 residues long: DNA-directed RNA polymerase subunit beta (1250 aa).

The segment at 1139–1226 (GGAELAKPAP…DLFDEGDEDL (88 aa)) is disordered. 2 stretches are compositionally biased toward acidic residues: residues 1155-1183 (ESGE…DPEE) and 1207-1226 (ADDD…DEDL).

It belongs to the RNA polymerase beta chain family. In terms of assembly, the RNAP catalytic core consists of 2 alpha, 1 beta, 1 beta' and 1 omega subunit. When a sigma factor is associated with the core the holoenzyme is formed, which can initiate transcription.

The enzyme catalyses RNA(n) + a ribonucleoside 5'-triphosphate = RNA(n+1) + diphosphate. DNA-dependent RNA polymerase catalyzes the transcription of DNA into RNA using the four ribonucleoside triphosphates as substrates. In Symbiobacterium thermophilum (strain DSM 24528 / JCM 14929 / IAM 14863 / T), this protein is DNA-directed RNA polymerase subunit beta.